The primary structure comprises 36 residues: Photosystem I reaction center subunit VIII (36 aa).

A helical membrane pass occupies residues 8-28; the sequence is SIFVPLVGLVFPAIAIASLFL.

This sequence belongs to the PsaI family.

It is found in the plastid. It localises to the chloroplast thylakoid membrane. May help in the organization of the PsaL subunit. The chain is Photosystem I reaction center subunit VIII from Jasminum nudiflorum (Winter jasmine).